We begin with the raw amino-acid sequence, 57 residues long: uncharacterized protein (57 aa).

2 consecutive transmembrane segments (helical) span residues 2-22 (LLVV…LRSV) and 29-49 (GFLL…MTVI).

Its subcellular location is the cell membrane. This is an uncharacterized protein from Bacillus subtilis (strain 168).